A 247-amino-acid chain; its full sequence is tRNA (guanine-N(1)-)-methyltransferase (247 aa).

Residues Gly116 and 135-140 (IGDYVL) each bind S-adenosyl-L-methionine.

Belongs to the RNA methyltransferase TrmD family. Homodimer.

Its subcellular location is the cytoplasm. It carries out the reaction guanosine(37) in tRNA + S-adenosyl-L-methionine = N(1)-methylguanosine(37) in tRNA + S-adenosyl-L-homocysteine + H(+). Its function is as follows. Specifically methylates guanosine-37 in various tRNAs. This chain is tRNA (guanine-N(1)-)-methyltransferase, found in Symbiobacterium thermophilum (strain DSM 24528 / JCM 14929 / IAM 14863 / T).